The chain runs to 575 residues: Arginine--tRNA ligase (575 aa).

Positions 136–146 (ANPTGPLHVGH) match the 'HIGH' region motif.

This sequence belongs to the class-I aminoacyl-tRNA synthetase family. In terms of assembly, monomer.

The protein resides in the cytoplasm. It catalyses the reaction tRNA(Arg) + L-arginine + ATP = L-arginyl-tRNA(Arg) + AMP + diphosphate. The sequence is that of Arginine--tRNA ligase from Polynucleobacter necessarius subsp. necessarius (strain STIR1).